The primary structure comprises 165 residues: Photosystem I assembly protein Ycf3 (165 aa).

TPR repeat units follow at residues 32–65 (AFTYYRDGMSAQSEGNYAEALQNYYEAMRLEIDP), 69–102 (SYILYNIGLIHTSNGEHTKALEYYFRALERNPFL), and 117–150 (GEQAIRQGDSEIAEAWFDQAAEYWKQALTLTPGN).

This sequence belongs to the Ycf3 family.

The protein resides in the plastid. It localises to the chloroplast thylakoid membrane. Functionally, essential for the assembly of the photosystem I (PSI) complex. May act as a chaperone-like factor to guide the assembly of the PSI subunits. The chain is Photosystem I assembly protein Ycf3 from Spinacia oleracea (Spinach).